Reading from the N-terminus, the 459-residue chain is 2-(3-amino-3-carboxypropyl)histidine synthase subunit 1 (459 aa).

Residues 1 to 68 form a disordered region; it reads MEDDRAQVDL…AGANTSIEDS (68 aa). Positions 41–61 are enriched in low complexity; sequence SAAAGKSSSSSSNSTSQPAGA. Residues C165, C268, and C403 each contribute to the [4Fe-4S] cluster site.

Belongs to the DPH1/DPH2 family. DPH1 subfamily. Component of the 2-(3-amino-3-carboxypropyl)histidine synthase complex composed of dph-1, dph-2, dph-3 and a NADH-dependent reductase, predominantly cbr-1. It depends on [4Fe-4S] cluster as a cofactor.

It is found in the cytoplasm. The catalysed reaction is L-histidyl-[translation elongation factor 2] + S-adenosyl-L-methionine = 2-[(3S)-amino-3-carboxypropyl]-L-histidyl-[translation elongation factor 2] + S-methyl-5'-thioadenosine + H(+). The protein operates within protein modification; peptidyl-diphthamide biosynthesis. Its function is as follows. Catalyzes the first step of diphthamide biosynthesis, a post-translational modification of histidine which occurs in elongation factor 2. Dph-1 and dph-2 transfer a 3-amino-3-carboxypropyl (ACP) group from S-adenosyl-L-methionine (SAM) to a histidine residue, the reaction is assisted by a reduction system comprising dph-3 and a NADH-dependent reductase, predominantly cbr-1. In Neurospora crassa (strain ATCC 24698 / 74-OR23-1A / CBS 708.71 / DSM 1257 / FGSC 987), this protein is 2-(3-amino-3-carboxypropyl)histidine synthase subunit 1 (dph-1).